The following is a 469-amino-acid chain: Neuraminidase (469 aa).

Over 1-6 (MNPNQK) the chain is Intravirion. The chain crosses the membrane as a helical span at residues 7–27 (IITIGSICMVVGIISLILQIG). Positions 11–33 (GSICMVVGIISLILQIGNIVSIW) are involved in apical transport and lipid raft association. Residues 28-469 (NIVSIWISHS…DAELPLNIDK (442 aa)) are Virion surface-facing. Residues 36-90 (HSIQTGNQNHTGTCDQSIITYKNSTWVNQTYVNISNTNVVAGKDTTSVILAGNSS) are hypervariable stalk region. Residues Asn-44, Asn-58, Asn-63, Asn-68, and Asn-88 are each glycosylated (N-linked (GlcNAc...) asparagine; by host). Positions 91–469 (LCPIRGWAIY…DAELPLNIDK (379 aa)) are head of neuraminidase. Cystine bridges form between Cys-92-Cys-417, Cys-124-Cys-129, Cys-184-Cys-231, Cys-233-Cys-238, Cys-279-Cys-292, Cys-281-Cys-290, Cys-318-Cys-335, and Cys-421-Cys-446. Arg-118 is a substrate binding site. An N-linked (GlcNAc...) asparagine; by host glycan is attached at Asn-146. Asp-151 acts as the Proton donor/acceptor in catalysis. A substrate-binding site is contributed by Arg-152. An N-linked (GlcNAc...) asparagine; by host glycan is attached at Asn-235. 277 to 278 (EE) serves as a coordination point for substrate. Substrate is bound at residue Arg-293. Positions 294, 298, and 324 each coordinate Ca(2+). Residue Asn-365 is glycosylated (N-linked (GlcNAc...) asparagine; by host). A substrate-binding site is contributed by Arg-368. Tyr-402 (nucleophile) is an active-site residue.

This sequence belongs to the glycosyl hydrolase 34 family. In terms of assembly, homotetramer. It depends on Ca(2+) as a cofactor. In terms of processing, N-glycosylated.

The protein resides in the virion membrane. The protein localises to the host apical cell membrane. The enzyme catalyses Hydrolysis of alpha-(2-&gt;3)-, alpha-(2-&gt;6)-, alpha-(2-&gt;8)- glycosidic linkages of terminal sialic acid residues in oligosaccharides, glycoproteins, glycolipids, colominic acid and synthetic substrates.. Inhibited by the neuraminidase inhibitors zanamivir (Relenza) and oseltamivir (Tamiflu). These drugs interfere with the release of progeny virus from infected cells and are effective against all influenza strains. Resistance to neuraminidase inhibitors is quite rare. Functionally, catalyzes the removal of terminal sialic acid residues from viral and cellular glycoconjugates. Cleaves off the terminal sialic acids on the glycosylated HA during virus budding to facilitate virus release. Additionally helps virus spread through the circulation by further removing sialic acids from the cell surface. These cleavages prevent self-aggregation and ensure the efficient spread of the progeny virus from cell to cell. Otherwise, infection would be limited to one round of replication. Described as a receptor-destroying enzyme because it cleaves a terminal sialic acid from the cellular receptors. May facilitate viral invasion of the upper airways by cleaving the sialic acid moieties on the mucin of the airway epithelial cells. Likely to plays a role in the budding process through its association with lipid rafts during intracellular transport. May additionally display a raft-association independent effect on budding. Plays a role in the determination of host range restriction on replication and virulence. Sialidase activity in late endosome/lysosome traffic seems to enhance virus replication. This chain is Neuraminidase, found in Influenza A virus (strain A/Fort Monmouth/1/1947 H1N1).